The chain runs to 427 residues: uncharacterized protein (427 aa).

Belongs to the CAF1 family.

This is an uncharacterized protein from Schizosaccharomyces pombe (strain 972 / ATCC 24843) (Fission yeast).